We begin with the raw amino-acid sequence, 62 residues long: Protein UL148D (62 aa).

Residues 30-50 (WWISVAIVIFIGVCLVALMYF) form a helical membrane-spanning segment.

Its subcellular location is the host membrane. This Human cytomegalovirus (strain Merlin) (HHV-5) protein is Protein UL148D (UL148D).